The primary structure comprises 1687 residues: MAENLSDQDCFEKLSSSKEGQHWFCSGLLTQYIQPTFFWFAHDETPSFKWVLNAYHERLRSCTSCIQAYYELRNESLAKGSYSFTGFSITDLQEKWNKWDIIRVLEDFKALEDETIDFTSLPCLIFETLLNPKLFTCKNIYKNAIDAFNGLLSDWCSNIFLPGYLLFFYEASHPDVLEWVHSFFKENTEIRISSATVDAVFNTVVFESQNSSDSDCNFVSISSPEFWERTYMFLELLPLQSITAACESILKDYLLNLVKTSESLSSQQMSCLRICCNSSSFWSAADSFKEVSSFLKNLLKNVTATPFEVSDMNWAYIIASFFRTCLNDFVSVFPEWLKGFVEEKRTIGFIIYSVLDALFDLLSLDYSSPSFLNNTLSLMNANSITILQDYPEYMLKLRLHSLLYDIAFISWSHKAITKNPSFVFDPSYELSPFWKLDNLQEEKISDVLFSKISSCCFAHDIEISENSTPSGTMVQFAELWQVMSEYISGFLKGFSEKSSTEISNMLGDSSKFDTVVSFLLSPTQPLYVSAFHIVQIITNCTKNRNEALKKLVAMDFRGIVHGLADAVLNWQSILSFFPALRIMRFLSITNKSLSSDNSAFTENDIPTLGAYWQCIWNILDLVFSNVARWSLNNPADTVKALMKLTLKFVDDLFQNDGIFIKLLAKFDSLILLGETSESLFSFIMWLKINDLELRGIVINSLCKLFTKFSNFDYLFEDRTVTFLTDFIIRKQKAHLSADQCKQLANVLTQASPEAKTVLEQHRLSEMRKTKKQTELTNSAHVIKPSPTPQITVKQNTTKSSSAPRMGMLEQLKQEYLTKRNFESKLKSSAVSSRKPTFNEVKPANLLAEDLSDNEDDIDRKQGLFSLAKANKIPEIRQQERRQVQLLSNSTIKMHPSQIRMMTNRNVANVKARLFPSMTDFYKEILSWEPANQSPNPVLKFHKLDGKIIDSFKTVEHYMEVLQPMIFMECWSQIQSTKLDLKFSPVEGIMVERTAVNNFVDIGVSVAPKDLYGYPLYDTEVVSLAFNKEDASSMKGLCCFAKVERIVRQTNGVLVVLRTLPSMEILNKLQGNCALWFLKLTNLATFTRQYAGIRGLPYFHLADDIIRARPCSQPVKHSSSEIKAAMKRYQVNEPQAKAIMCALDNNGFTLIQGPPGTGKTKTIIGIISALLVDLSRYHITRPNQQSKSTESKQQILLCAPSNAAVDEVLLRLKRGFLLENGEKYIPRVVRIGNPETINVSVRDLSLEYQTEKQLLEVNQGAIDLGSLQELTRWRDTFYDCIQKIEELEKQIDVARDVAEDTKSLGKELQNKINEKNLAEQKVEELQSQSFTKNKEVDLLRKKAQKAILKQADVVCATLSGSGHDLVAHSSLNFSTVIIDEAAQAVELDTIIPLRYGAKKCILVGDPNQLPPTVLSKKAASLNYSQSLFVRIQKNFSNQMCLLSIQYRMHPDISHFPSKKFYDSRLEDGDNMAEKTQQVWHVNPKFTQYRLFDVRGKERTSNTMSTYNLEEVEYLVNMVDELLNKFPDVNFTGRIGVITPYRSQLHELRRAFKVKYGKSFMSTIDIQTVDGFQGQEKDIIFFSCVKSYSKHGIGFLRDFRRLNVALTRARSSLLIIGNMETLKTDDLWGSLVDDALSRKLVESPHIDSEGRLITISRTSEKRMKNEEFVEPPSKKLANSEPSKEIRQRS.

The interval 781–801 (VIKPSPTPQITVKQNTTKSSS) is disordered. The segment covering 788–801 (PQITVKQNTTKSSS) has biased composition (polar residues). ATP is bound by residues Gln1134, 1155–1159 (GTGKT), Gln1407, Tyr1445, and Glu1574. Residues 1661 to 1687 (MKNEEFVEPPSKKLANSEPSKEIRQRS) form a disordered region.

Belongs to the DNA2/NAM7 helicase family. In terms of assembly, monomer.

Its subcellular location is the nucleus. ATP-dependent 5'-&gt;3' DNA/RNA helicase required for the expression and maturation of diverse classes of non-protein-coding RNAs like precursor tRNAs, rRNAs and small nuclear (snRNA) and nucleolar (snoRNA) RNAs. Directs RNA polymerase II transcription termination on snoRNAs as well as on several short protein-coding genes. May also play a role in transcription-coupled nucleotide excision repair. This is Helicase sen1 (sen1) from Schizosaccharomyces pombe (strain 972 / ATCC 24843) (Fission yeast).